A 68-amino-acid chain; its full sequence is Molybdenum-pterin-binding protein 1 (68 aa).

Residues 2-68 (SISARNQLKG…IKSTDVMILA (67 aa)) enclose the Mop domain.

Functionally, binds one mole of molybdenum per mole of protein and contains a pterin. In Clostridium pasteurianum, this protein is Molybdenum-pterin-binding protein 1 (mopI).